Here is a 301-residue protein sequence, read N- to C-terminus: Probable protein phosphatase 2C 4 (301 aa).

A compositionally biased stretch (polar residues) spans methionine 1 to glutamate 18. Positions methionine 1–lysine 20 are disordered. A PPM-type phosphatase domain is found at isoleucine 23 to leucine 298. Residues aspartate 57, glycine 58, aspartate 237, and aspartate 289 each coordinate Mn(2+).

This sequence belongs to the PP2C family. Requires Mg(2+) as cofactor. Mn(2+) is required as a cofactor.

Its subcellular location is the membrane. The enzyme catalyses O-phospho-L-seryl-[protein] + H2O = L-seryl-[protein] + phosphate. It catalyses the reaction O-phospho-L-threonyl-[protein] + H2O = L-threonyl-[protein] + phosphate. In terms of biological role, enzyme with a broad specificity. This chain is Probable protein phosphatase 2C 4, found in Paramecium tetraurelia.